A 644-amino-acid polypeptide reads, in one-letter code: Exoribonuclease 2 (644 aa).

The RNB domain maps to 189–516 (RQDLTALNFV…NHRLLKAVIK (328 aa)). The S1 motif domain maps to 561–643 (NTRFAAEIID…ETRSIIARPA (83 aa)).

This sequence belongs to the RNR ribonuclease family. RNase II subfamily.

Its subcellular location is the cytoplasm. The enzyme catalyses Exonucleolytic cleavage in the 3'- to 5'-direction to yield nucleoside 5'-phosphates.. In terms of biological role, involved in mRNA degradation. Hydrolyzes single-stranded polyribonucleotides processively in the 3' to 5' direction. This chain is Exoribonuclease 2, found in Salmonella newport (strain SL254).